The following is a 239-amino-acid chain: Phosphoribosylaminoimidazole-succinocarboxamide synthase (239 aa).

It belongs to the SAICAR synthetase family.

The enzyme catalyses 5-amino-1-(5-phospho-D-ribosyl)imidazole-4-carboxylate + L-aspartate + ATP = (2S)-2-[5-amino-1-(5-phospho-beta-D-ribosyl)imidazole-4-carboxamido]succinate + ADP + phosphate + 2 H(+). It participates in purine metabolism; IMP biosynthesis via de novo pathway; 5-amino-1-(5-phospho-D-ribosyl)imidazole-4-carboxamide from 5-amino-1-(5-phospho-D-ribosyl)imidazole-4-carboxylate: step 1/2. This chain is Phosphoribosylaminoimidazole-succinocarboxamide synthase, found in Nitratiruptor sp. (strain SB155-2).